The primary structure comprises 122 residues: MAYEPMKPTKAGLEAPLEQIHKIRITLSSKNVKNLEKVCTDLVRGAKDKRLRVKGPVRMPTKVLKITTRKAPCGEGTNTWDRFELRVHKRVIDLFSSPDVVKQITSITIEPGVEVEVTIADS.

Belongs to the universal ribosomal protein uS10 family.

The chain is Small ribosomal subunit protein uS10y (RPS20B) from Arabidopsis thaliana (Mouse-ear cress).